The sequence spans 566 residues: Phosphatidylinositol 4-kinase gamma 4 (566 aa).

2 consecutive Ubiquitin-like domains span residues 34-111 (TIMI…SDLQ) and 112-190 (VLDV…AKVR). Positions 250 to 263 (DGLKSGNSPVRSSE) are enriched in polar residues. The disordered stretch occupies residues 250–272 (DGLKSGNSPVRSSEGTGGAYFMQ). A PI3K/PI4K catalytic domain is found at 255–547 (GNSPVRSSEG…AVLPGTSEAA (293 aa)). A G-loop region spans residues 261-267 (SSEGTGG). Residues 262 to 268 (SEGTGGA), Lys-284, and 374 to 377 (QMFT) each bind ATP. Residues 407–415 (ANADRHGGN) form a catalytic loop region. Residues 430–456 (PIDHGYCLPESFEDCTFEWLYWPQARK) are activation loop. Residue Asp-432 coordinates ATP.

It belongs to the PI3/PI4-kinase family. Type II PI4K subfamily. Interacts with RPN10, UFD1 and CDC48 in vitro. Autophosphorylated.

The protein resides in the membrane. It catalyses the reaction a 1,2-diacyl-sn-glycero-3-phospho-(1D-myo-inositol) + ATP = a 1,2-diacyl-sn-glycero-3-phospho-(1D-myo-inositol 4-phosphate) + ADP + H(+). Its function is as follows. The phosphorylation of phosphatidylinositol (PI) to PI4P is the first committed step in the generation of phosphatidylinositol 4,5-bisphosphate (PIP2), a precursor of the second messenger inositol 1,4,5-trisphosphate (InsP3). Undergoes autophosphorylation and phosphorylates serine/threonine residues of protein substrates. Phosphorylates RPN10 and UFD1 in vitro. In Arabidopsis thaliana (Mouse-ear cress), this protein is Phosphatidylinositol 4-kinase gamma 4.